Here is a 549-residue protein sequence, read N- to C-terminus: MSSTVSLLFCCLFLQLCPSAQQYHGEKGISVPDHGFCQPISIPLCTDIAYNQTIMPNLLGHTNQEDAGLEVHQFYPLVKVQCSPELRFFLCSMYAPVCTVLEQAIPPCRSLCERARQGCEALMNKFGFQWPERLRCENFPVHGAGEICVGQNTSDNSPSGPTARPSPYLPDSITFQPHPHRDFTCPRQLKVPPYLAYRFLGEKDCGAPCEPGKANGLMYFKEEEVRFARLWVGIWAILCCISTLFTVLTYLVDMRRFSYPERPIIFLSGCYFMVAVAYTAGFLLEERAVCVERFSEDSYRTVAQGTKKEGCTILFMILYFFGMASSIWWVILSLTWFLSAGMKWGHEAIEANSQYFHLAAWAVPAVKTITILAMGQVDGDVLSGVCYVGINSVDSLRGFVLAPLFVYLFIGTSFLLAGFVSLFRIRTIMKHDGTKTEKLEKLMVRIGVFSVMYTVPATIVLACYFYEQAFRDTWEKTWLVQTCKGYAVPCPNYNFAPMSPDFTVFMIKYLMTMIVGITSSFWIWSGKTLQSWRRFYHRLSNGSKGETAV.

An N-terminal signal peptide occupies residues 1–22 (MSSTVSLLFCCLFLQLCPSAQQ). Residues 23-231 (YHGEKGISVP…EEEVRFARLW (209 aa)) are Extracellular-facing. Positions 32–151 (PDHGFCQPIS…HGAGEICVGQ (120 aa)) constitute an FZ domain. 5 disulfides stabilise this stretch: C37-C98, C45-C91, C82-C119, C108-C148, and C112-C136. N51 is a glycosylation site (N-linked (GlcNAc...) asparagine). N-linked (GlcNAc...) asparagine glycosylation is present at N152. The helical transmembrane segment at 232-252 (VGIWAILCCISTLFTVLTYLV) threads the bilayer. At 253–263 (DMRRFSYPERP) the chain is on the cytoplasmic side. Residues 264–284 (IIFLSGCYFMVAVAYTAGFLL) form a helical membrane-spanning segment. Over 285–311 (EERAVCVERFSEDSYRTVAQGTKKEGC) the chain is Extracellular. Residues 312-332 (TILFMILYFFGMASSIWWVIL) form a helical membrane-spanning segment. Over 333 to 354 (SLTWFLSAGMKWGHEAIEANSQ) the chain is Cytoplasmic. A helical transmembrane segment spans residues 355–375 (YFHLAAWAVPAVKTITILAMG). The Extracellular portion of the chain corresponds to 376 to 398 (QVDGDVLSGVCYVGINSVDSLRG). Residues 399-419 (FVLAPLFVYLFIGTSFLLAGF) traverse the membrane as a helical segment. The Cytoplasmic portion of the chain corresponds to 420-445 (VSLFRIRTIMKHDGTKTEKLEKLMVR). The helical transmembrane segment at 446-466 (IGVFSVMYTVPATIVLACYFY) threads the bilayer. At 467–503 (EQAFRDTWEKTWLVQTCKGYAVPCPNYNFAPMSPDFT) the chain is on the extracellular side. A helical membrane pass occupies residues 504–524 (VFMIKYLMTMIVGITSSFWIW). The Cytoplasmic segment spans residues 525–549 (SGKTLQSWRRFYHRLSNGSKGETAV). A Lys-Thr-X-X-X-Trp motif, mediates interaction with the PDZ domain of Dvl family members motif is present at residues 527 to 532 (KTLQSW). The PDZ-binding motif lies at 547-549 (TAV).

It belongs to the G-protein coupled receptor Fz/Smo family. Interacts with wnt11 and sdc4. The extracellular domain interacts with the extracellular domain of pcdh8/papc. Expressed in the animal region of cleavage stage embryos. During gastrulation, broadly expressed on the dorsal side of the embryo in deep mesodermal cells surrounding the blastopore lip and in presumptive anterior neuroectoderm. During neurulation, becomes progressively more restricted to the dorsal epidermis, neural plate, and neural tube. Expressed in the cranial neural crest of neurulae and tailbud embryos as well as the pronephros of tailbud embryos. Localized to the brain of neurulae, tailbud embryos and tadpoles. In tadpoles, strongly expressed in the eye and developing heart.

It is found in the cell membrane. The protein localises to the endosome membrane. Receptor for Wnt proteins. Acts in both canonical and non-canonical Wnt pathways. Although different papers report differing Wnt preferences, wnt5a, wnt8b and wnt11 have been proposed as synergists. In the canonical Wnt pathway, acts via beta-catenin to promote the expression of the dorsal genes siamois, twin and nodal3 and to establish the dorsal axis of the embryo and induce dorsal mesoderm formation. In a non-canonical Wnt/planar cell polarity (PCP) pathway, acts with sdc4 and dvl2/dsh to regulate convergent extension cell movements during gastrulation. Triggers phosphorylation of dvl2/dsh and its translocation to the plasma membrane. In a third branch of Wnt signaling, acts in a non-canonical pathway via trimeric G proteins, and independently of dvl2/dsh, to recruit protein kinase C (PKC) to the membrane and thus activate PKC. PKC signaling controls cell sorting and tissue separation during gastrulation. The protein is Frizzled-7-A (fzd7-a) of Xenopus laevis (African clawed frog).